The sequence spans 286 residues: MTELSESTTSKFVTINEKGLSNFRIHLNDAGQGEAVIMLHGGGPGAGGWSNYYRNIGPFVAAGYRVILPDAPGFNKSDAVVMDEQRGLVNARAVKGMMDALGIDKAHLVGNSMGGAGALNFALEYPERTGKVILMGPGGLGASLFNPMPMEGIKLLFKLYAEPSLETLKQMLNVFMFDQSLITDELLQGRWANIQRNPEHLKNFILSAQKVPLSAWDVSPRLGEIKAKTLVTWGRDDRFVPLDHGLKLVANMPDAQLHVFPRCGHWAQWEHADAFNRLTLDFLANG.

In terms of domain architecture, AB hydrolase-1 spans 36–271 (VIMLHGGGPG…RCGHWAQWEH (236 aa)). Substrate is bound by residues 42 to 43 (GG), N51, N111, S180, and R190. The Proton acceptor role is filled by H265. W266 is a substrate binding site.

This sequence belongs to the AB hydrolase superfamily. BphD family. As to quaternary structure, homodimer.

The catalysed reaction is 2,6-dioxo-6-phenylhexa-3-enoate + H2O = 2-oxopent-4-enoate + benzoate + H(+). It participates in xenobiotic degradation; biphenyl degradation; 2-hydroxy-2,4-pentadienoate and benzoate from biphenyl: step 4/4. In terms of biological role, catalyzes an unusual C-C bond hydrolysis of 2-hydroxy-6-oxo-6-phenylhexa-2,4-dienoic acid (HOPDA) to produce benzoic acid and 2-hydroxy-2,4-pentadienoic acid (HPD). The protein is 2-hydroxy-6-oxo-6-phenylhexa-2,4-dienoate hydrolase of Burkholderia cepacia (Pseudomonas cepacia).